The following is a 296-amino-acid chain: Coatomer subunit epsilon (296 aa).

The protein belongs to the COPE family. In terms of assembly, oligomeric complex that consists of at least the alpha, beta, beta', gamma, delta, epsilon and zeta subunits. Interacts with the ESCRT-0 subunit VPS27.

The protein localises to the cytoplasm. Its subcellular location is the golgi apparatus membrane. It is found in the cytoplasmic vesicle. It localises to the COPI-coated vesicle membrane. Its function is as follows. The coatomer is a cytosolic protein complex that binds to dilysine motifs and reversibly associates with Golgi non-clathrin-coated vesicles, which further mediate biosynthetic protein transport from the ER, via the Golgi up to the trans Golgi network. The coatomer complex is required for budding from Golgi membranes, and is essential for the retrograde Golgi-to-ER transport of dilysine-tagged proteins. In Saccharomyces cerevisiae (strain ATCC 204508 / S288c) (Baker's yeast), this protein is Coatomer subunit epsilon (SEC28).